The chain runs to 227 residues: Venom allergen 5 (227 aa).

Positions 1–23 are cleaved as a signal peptide; it reads MEISGLVYLIIIVTIIDLPYGKA. Disulfide bonds link Cys-27/Cys-40, Cys-31/Cys-124, Cys-49/Cys-117, and Cys-193/Cys-210. The SCP domain maps to 68–212; it reads LKEHNDFRQK…WHYHYLVCNY (145 aa).

The protein belongs to the CRISP family. Venom allergen 5-like subfamily. In terms of tissue distribution, expressed by the venom gland.

The protein localises to the secreted. In Vespula maculifrons (Eastern yellow jacket), this protein is Venom allergen 5.